A 194-amino-acid chain; its full sequence is Small ribosomal subunit protein uS4c (194 aa).

An S4 RNA-binding domain is found at 82–143 (MRLDNILFRL…KERSKVLIQN (62 aa)).

This sequence belongs to the universal ribosomal protein uS4 family. As to quaternary structure, part of the 30S ribosomal subunit. Contacts protein S5. The interaction surface between S4 and S5 is involved in control of translational fidelity.

The protein localises to the plastid. It is found in the chloroplast. In terms of biological role, one of the primary rRNA binding proteins, it binds directly to 16S rRNA where it nucleates assembly of the body of the 30S subunit. Functionally, with S5 and S12 plays an important role in translational accuracy. The sequence is that of Small ribosomal subunit protein uS4c (rps4) from Trimezia steyermarkii (Steyermark's trimezia).